Reading from the N-terminus, the 132-residue chain is D-ribose pyranase (132 aa).

Residue histidine 20 is the Proton donor of the active site. Substrate-binding positions include aspartate 28, histidine 98, and 121–123 (YSN).

It belongs to the RbsD / FucU family. RbsD subfamily. Homodecamer.

Its subcellular location is the cytoplasm. The enzyme catalyses beta-D-ribopyranose = beta-D-ribofuranose. It participates in carbohydrate metabolism; D-ribose degradation; D-ribose 5-phosphate from beta-D-ribopyranose: step 1/2. Its function is as follows. Catalyzes the interconversion of beta-pyran and beta-furan forms of D-ribose. The polypeptide is D-ribose pyranase (Kosmotoga olearia (strain ATCC BAA-1733 / DSM 21960 / TBF 19.5.1)).